A 598-amino-acid polypeptide reads, in one-letter code: Aspartate--tRNA(Asp/Asn) ligase (598 aa).

Residue glutamate 177 coordinates L-aspartate. The tract at residues 201–204 (QIFK) is aspartate. L-aspartate-binding residues include arginine 223 and histidine 451. 223 to 225 (RDE) is an ATP binding site. Glutamate 485 provides a ligand contact to ATP. Residue arginine 492 participates in L-aspartate binding. 537–540 (GVDR) is an ATP binding site.

Belongs to the class-II aminoacyl-tRNA synthetase family. Type 1 subfamily. As to quaternary structure, homodimer.

The protein localises to the cytoplasm. It catalyses the reaction tRNA(Asx) + L-aspartate + ATP = L-aspartyl-tRNA(Asx) + AMP + diphosphate. Its function is as follows. Aspartyl-tRNA synthetase with relaxed tRNA specificity since it is able to aspartylate not only its cognate tRNA(Asp) but also tRNA(Asn). Reaction proceeds in two steps: L-aspartate is first activated by ATP to form Asp-AMP and then transferred to the acceptor end of tRNA(Asp/Asn). The sequence is that of Aspartate--tRNA(Asp/Asn) ligase from Anaplasma phagocytophilum (strain HZ).